The sequence spans 206 residues: Dephospho-CoA kinase (206 aa).

One can recognise a DPCK domain in the interval 4–200; it reads IVALTGGIGS…AHYLQLASQF (197 aa). Residue 12-17 coordinates ATP; the sequence is GSGKST.

The protein belongs to the CoaE family.

The protein localises to the cytoplasm. It catalyses the reaction 3'-dephospho-CoA + ATP = ADP + CoA + H(+). The protein operates within cofactor biosynthesis; coenzyme A biosynthesis; CoA from (R)-pantothenate: step 5/5. Its function is as follows. Catalyzes the phosphorylation of the 3'-hydroxyl group of dephosphocoenzyme A to form coenzyme A. This chain is Dephospho-CoA kinase, found in Shigella boydii serotype 4 (strain Sb227).